Here is a 220-residue protein sequence, read N- to C-terminus: Riboflavin kinase (220 aa).

Residues Met1–Asn92 are H-T-H motif-like. The riboflavin kinase stretch occupies residues Ile93–Ala220. Gly102–Lys107 lines the CDP pocket. Thr131 and Asn133 together coordinate Mg(2+). The FMN site is built by Thr188 and Glu195. Position 200 to 203 (Lys200 to Arg203) interacts with CDP.

This sequence belongs to the archaeal riboflavin kinase family. Requires Mg(2+) as cofactor.

It carries out the reaction riboflavin + CTP = CDP + FMN + H(+). Its pathway is cofactor biosynthesis; FMN biosynthesis; FMN from riboflavin (CTP route): step 1/1. Catalyzes the CTP-dependent phosphorylation of riboflavin (vitamin B2) to form flavin mononucleotide (FMN). In Thermoplasma volcanium (strain ATCC 51530 / DSM 4299 / JCM 9571 / NBRC 15438 / GSS1), this protein is Riboflavin kinase (ribK).